Here is a 404-residue protein sequence, read N- to C-terminus: Probable tRNA sulfurtransferase (404 aa).

Residues 61 to 166 (EAVSERLKDV…SGYSYIMCDE (106 aa)) enclose the THUMP domain. ATP is bound by residues 184-185 (LL), 209-210 (HF), Arg266, Gly288, and Gln297.

The protein belongs to the ThiI family.

The protein localises to the cytoplasm. The catalysed reaction is [ThiI sulfur-carrier protein]-S-sulfanyl-L-cysteine + a uridine in tRNA + 2 reduced [2Fe-2S]-[ferredoxin] + ATP + H(+) = [ThiI sulfur-carrier protein]-L-cysteine + a 4-thiouridine in tRNA + 2 oxidized [2Fe-2S]-[ferredoxin] + AMP + diphosphate. It carries out the reaction [ThiS sulfur-carrier protein]-C-terminal Gly-Gly-AMP + S-sulfanyl-L-cysteinyl-[cysteine desulfurase] + AH2 = [ThiS sulfur-carrier protein]-C-terminal-Gly-aminoethanethioate + L-cysteinyl-[cysteine desulfurase] + A + AMP + 2 H(+). The protein operates within cofactor biosynthesis; thiamine diphosphate biosynthesis. Its function is as follows. Catalyzes the ATP-dependent transfer of a sulfur to tRNA to produce 4-thiouridine in position 8 of tRNAs, which functions as a near-UV photosensor. Also catalyzes the transfer of sulfur to the sulfur carrier protein ThiS, forming ThiS-thiocarboxylate. This is a step in the synthesis of thiazole, in the thiamine biosynthesis pathway. The sulfur is donated as persulfide by IscS. The chain is Probable tRNA sulfurtransferase from Bacillus cereus (strain AH820).